A 955-amino-acid chain; its full sequence is 2-oxoglutarate dehydrogenase E1 component (955 aa).

This sequence belongs to the alpha-ketoglutarate dehydrogenase family. Homodimer. Part of the 2-oxoglutarate dehydrogenase (OGDH) complex composed of E1 (2-oxoglutarate dehydrogenase), E2 (dihydrolipoamide succinyltransferase) and E3 (dihydrolipoamide dehydrogenase); the complex contains multiple copies of the three enzymatic components (E1, E2 and E3). Thiamine diphosphate is required as a cofactor.

The catalysed reaction is N(6)-[(R)-lipoyl]-L-lysyl-[protein] + 2-oxoglutarate + H(+) = N(6)-[(R)-S(8)-succinyldihydrolipoyl]-L-lysyl-[protein] + CO2. Its function is as follows. E1 component of the 2-oxoglutarate dehydrogenase (OGDH) complex which catalyzes the decarboxylation of 2-oxoglutarate, the first step in the conversion of 2-oxoglutarate to succinyl-CoA and CO(2). The sequence is that of 2-oxoglutarate dehydrogenase E1 component from Bacillus cereus (strain G9842).